The following is a 465-amino-acid chain: UDP-N-acetylmuramate--L-alanine ligase (465 aa).

112–118 (GTHGKTT) serves as a coordination point for ATP.

It belongs to the MurCDEF family.

It localises to the cytoplasm. It carries out the reaction UDP-N-acetyl-alpha-D-muramate + L-alanine + ATP = UDP-N-acetyl-alpha-D-muramoyl-L-alanine + ADP + phosphate + H(+). It participates in cell wall biogenesis; peptidoglycan biosynthesis. Its function is as follows. Cell wall formation. In Burkholderia orbicola (strain MC0-3), this protein is UDP-N-acetylmuramate--L-alanine ligase.